Reading from the N-terminus, the 584-residue chain is Long-chain-fatty-acid--AMP ligase FadD26 (584 aa).

This sequence belongs to the ATP-dependent AMP-binding enzyme family.

It carries out the reaction holo-[(phenol)carboxyphthiodiolenone synthase] + a long-chain fatty acid + ATP = a long-chain fatty acyl-[(phenol)carboxyphthiodiolenone synthase] + AMP + diphosphate. The catalysed reaction is eicosanoate + holo-[(phenol)carboxyphthiodiolenone synthase] + ATP = icosanoyl-[(phenol)carboxyphthiodiolenone synthase] + AMP + diphosphate. The enzyme catalyses holo-[(phenol)carboxyphthiodiolenone synthase] + docosanoate + ATP = docosanoyl-[(phenol)carboxyphthiodiolenone synthase] + AMP + diphosphate. The protein operates within lipid metabolism; fatty acid biosynthesis. Its function is as follows. Catalyzes the activation of long-chain fatty acids as acyl-adenylates (acyl-AMP), which are then transferred to the multifunctional polyketide synthase PpsA for further chain extension. Catalyzes the adenylation of the long-chain fatty acids eicosanoate (C20) or docosanoate (C22), and potentially the very-long-chain fatty acid lignocerate (C24). Involved in the biosynthesis of phthiocerol dimycocerosate (DIM A) and phthiodiolone dimycocerosate (DIM B). The sequence is that of Long-chain-fatty-acid--AMP ligase FadD26 from Mycobacterium marinum (strain ATCC BAA-535 / M).